We begin with the raw amino-acid sequence, 478 residues long: Zinc finger protein 410 (478 aa).

The interval 187 to 213 (NAKTSSNGENVHLGSGDGQSKDSGPLP) is disordered. C2H2-type zinc fingers lie at residues 219 to 243 (LKCTVEGCDRTFVWPAHFKYHLKTH), 249 to 273 (FICPAEGCGKSFYVLQRLKVHMRTH), 279 to 303 (FMCHESGCGKQFTTAGNLKNHRRIH), 309 to 333 (FLCEAQGCGRSFAEYSSLRKHLVVH), and 339 to 362 (HQCQVCGKTFSQSGSRNVHMRKHH). Zn(2+) is bound by residues Cys221, Cys226, His239, His243, Cys251, Cys256, His269, His273, Cys281, Cys286, His299, His303, Cys311, Cys316, His329, His333, Cys341, Cys344, His357, and His361.

Interacts with CDKN2A/p14ARF. In terms of processing, sumoylated. Sumoylation increases its half-life, possibly by blocking ubiquitin-mediated degradation. Post-translationally, O-glycosylated. O-GlcNAcylation may occur in response to increasing glucose levels and affect transcription factor activity. Widely expressed.

It localises to the nucleus. Its subcellular location is the chromosome. Transcription factor that binds to the sequence motif 5'-CATCCCATAATA-3', and is specifically required to silence expression of fetal hemoglobin in adult erythroid cells. Prevents expression of fetal hemoglobin genes HBG1 and HBG2 through CHD4: acts as a direct transcriptional activator of CHD4, a central component of the NuRD complex that represses transcription of fetal hemoglobin genes HBG1 and HBG2 in erythroid cells. May also activate transcription of matrix-remodeling genes such as MMP1 during fibroblast senescence. May activate transcription of the gap junction gene GJC1, perhaps in response to increasing glucose. However, recent studies suggest that ZNF410 is dedicated to regulate expression of a single gene: CHD4. The chain is Zinc finger protein 410 from Homo sapiens (Human).